Reading from the N-terminus, the 314-residue chain is DNA-directed RNA polymerase subunit alpha (314 aa).

Residues 1 to 228 (MIEIEKPKIE…EHLNIFVGLT (228 aa)) form an alpha N-terminal domain (alpha-NTD) region. The segment at 245–314 (KEKVLEMTIE…ELGLGLRKDD (70 aa)) is alpha C-terminal domain (alpha-CTD).

It belongs to the RNA polymerase alpha chain family. As to quaternary structure, homodimer. The RNAP catalytic core consists of 2 alpha, 1 beta, 1 beta' and 1 omega subunit. When a sigma factor is associated with the core the holoenzyme is formed, which can initiate transcription.

The catalysed reaction is RNA(n) + a ribonucleoside 5'-triphosphate = RNA(n+1) + diphosphate. Its function is as follows. DNA-dependent RNA polymerase catalyzes the transcription of DNA into RNA using the four ribonucleoside triphosphates as substrates. This chain is DNA-directed RNA polymerase subunit alpha, found in Bacillus thuringiensis (strain Al Hakam).